The chain runs to 95 residues: Aspartyl/glutamyl-tRNA(Asn/Gln) amidotransferase subunit C (95 aa).

It belongs to the GatC family. Heterotrimer of A, B and C subunits.

The catalysed reaction is L-glutamyl-tRNA(Gln) + L-glutamine + ATP + H2O = L-glutaminyl-tRNA(Gln) + L-glutamate + ADP + phosphate + H(+). It catalyses the reaction L-aspartyl-tRNA(Asn) + L-glutamine + ATP + H2O = L-asparaginyl-tRNA(Asn) + L-glutamate + ADP + phosphate + 2 H(+). Functionally, allows the formation of correctly charged Asn-tRNA(Asn) or Gln-tRNA(Gln) through the transamidation of misacylated Asp-tRNA(Asn) or Glu-tRNA(Gln) in organisms which lack either or both of asparaginyl-tRNA or glutaminyl-tRNA synthetases. The reaction takes place in the presence of glutamine and ATP through an activated phospho-Asp-tRNA(Asn) or phospho-Glu-tRNA(Gln). In Geotalea daltonii (strain DSM 22248 / JCM 15807 / FRC-32) (Geobacter daltonii), this protein is Aspartyl/glutamyl-tRNA(Asn/Gln) amidotransferase subunit C.